We begin with the raw amino-acid sequence, 366 residues long: Anhydro-N-acetylmuramic acid kinase (366 aa).

Residue 15–22 (GTSLDGVD) coordinates ATP.

Belongs to the anhydro-N-acetylmuramic acid kinase family.

It carries out the reaction 1,6-anhydro-N-acetyl-beta-muramate + ATP + H2O = N-acetyl-D-muramate 6-phosphate + ADP + H(+). It functions in the pathway amino-sugar metabolism; 1,6-anhydro-N-acetylmuramate degradation. Its pathway is cell wall biogenesis; peptidoglycan recycling. In terms of biological role, catalyzes the specific phosphorylation of 1,6-anhydro-N-acetylmuramic acid (anhMurNAc) with the simultaneous cleavage of the 1,6-anhydro ring, generating MurNAc-6-P. Is required for the utilization of anhMurNAc either imported from the medium or derived from its own cell wall murein, and thus plays a role in cell wall recycling. The protein is Anhydro-N-acetylmuramic acid kinase of Hydrogenovibrio crunogenus (strain DSM 25203 / XCL-2) (Thiomicrospira crunogena).